Consider the following 307-residue polypeptide: Transaldolase (307 aa).

The Schiff-base intermediate with substrate role is filled by Lys-125.

The protein belongs to the transaldolase family. Type 1 subfamily.

It localises to the cytoplasm. The enzyme catalyses D-sedoheptulose 7-phosphate + D-glyceraldehyde 3-phosphate = D-erythrose 4-phosphate + beta-D-fructose 6-phosphate. It participates in carbohydrate degradation; pentose phosphate pathway; D-glyceraldehyde 3-phosphate and beta-D-fructose 6-phosphate from D-ribose 5-phosphate and D-xylulose 5-phosphate (non-oxidative stage): step 2/3. In terms of biological role, transaldolase is important for the balance of metabolites in the pentose-phosphate pathway. The polypeptide is Transaldolase (Pseudomonas aeruginosa (strain ATCC 15692 / DSM 22644 / CIP 104116 / JCM 14847 / LMG 12228 / 1C / PRS 101 / PAO1)).